Consider the following 237-residue polypeptide: MNTLIQGPDHPSNAMSSRANNRSNNSRCPTCIDELDAMARNCPAHNTVNTVSRRQRRNAARAAAYRNANARVPLPLPVVSVSRPQAKASLRLPNNQVWVTRKASEWSAKTVDTNDAIPFKTIVEGIPEIGAETKFFRLLIGFVAVSDGTFGMVDGVTGDVIPDPPVVGRLGFKKNTYRSRDFDLGGKLLNQLDDRAVVWCLDERRREAKRVQLAGYWIAISKPAPLMPPEDFLVNQD.

Positions 1-26 (MNTLIQGPDHPSNAMSSRANNRSNNS) are disordered. Residues 12 to 26 (SNAMSSRANNRSNNS) show a composition bias toward low complexity.

This sequence belongs to the alphamovirus/ilarvirus capsid protein family.

It localises to the virion. In terms of biological role, capsid protein self-assembles to form an icosahedral capsid with a T=3 symmetry, about 29 nm in diameter, and consisting of 12 capsid protein pentamers and 20 capsid protein hexamers. Binds to the to the 3' end of the nonpolyadenylated viral RNA and is involved in viral RNA translation initiation. Probably binds RNA and plays a role in packaging. In Asparagus officinalis (Garden asparagus), this protein is Capsid protein.